Here is an 810-residue protein sequence, read N- to C-terminus: Volume-regulated anion channel subunit LRRC8A (810 aa).

An N-acetylmethionine modification is found at M1. The Cytoplasmic portion of the chain corresponds to 1–22 (MIPVTELRYFADTQPAYRILKP). A helical membrane pass occupies residues 23–47 (WWDVFTDYISIVMLMIAVFGGTLQV). Topologically, residues 48–123 (TQDKMICLPC…YENRLHWFAK (76 aa)) are extracellular. Cystine bridges form between C54–C310, C57–C65, and C113–C295. Residues N66 and N83 are each glycosylated (N-linked (GlcNAc...) asparagine). A helical transmembrane segment spans residues 124–142 (YFPYLVLLHTLIFLACSNF). The Cytoplasmic portion of the chain corresponds to 143–264 (WFKFPRTSSK…EEGDIVYRLY (122 aa)). At T200 the chain carries Phosphothreonine. S202 is subject to Phosphoserine. The residue at position 215 (T215) is a Phosphothreonine. The residue at position 217 (S217) is a Phosphoserine. A helical transmembrane segment spans residues 265 to 286 (MRQTIIKVIKFFLIICYTVYYV). Over 287 to 316 (HNIKFDVDCTVDIESLTGYRTYRCAHPLAT) the chain is Extracellular. Residues 317 to 341 (LFKILASFYISLVIFYGLICMYTLW) traverse the membrane as a helical segment. Topologically, residues 342–810 (WMLRRSLKKY…RLWRADKEQA (469 aa)) are cytoplasmic. LRR repeat units lie at residues 399-422 (ENKL…RLTK), 423-445 (NAQD…VFDL), 447-468 (ELEV…IAQL), 469-492 (TGLK…AFLR), 493-515 (ENLR…IYSL), 518-542 (LEEL…GLRE), 543-565 (LKRL…VTDV), 567-589 (VHLQ…SLKK), 590-613 (MVNL…IFSL), 614-637 (HNLQ…SFQH), 639-661 (HRLT…IGNL), 662-684 (TNLE…LFYC), 686-707 (KLRY…IGLL), 708-730 (QNLQ…LFQC), 732-753 (KLRA…VGEL), 754-776 (TNLT…LGEC), and 778-801 (LLKR…VKER). The Di-leucine motif signature appears at 706–707 (LL).

Belongs to the LRRC8 family. In terms of assembly, heterohexamer; oligomerizes with other LRRC8 proteins (LRRC8B, LRRC8C, LRRC8D and/or LRRC8E) to form a heterohexamer. Can form homohexamers in vitro, but these have lower conductance than heterohexamers. Detected in a channel complex that contains LRRC8A, LRRC8C and LRRC8E. In vivo, the subunit composition may depend primarily on expression levels, and heterooligomeric channels containing various proportions of the different LRRC8 proteins may coexist. Interact with GRB2. Interacts with NOX4; this interaction prevents the ubiquitin-mediated degradation of LRRC8A. N-glycosylated.

It is found in the cell membrane. The protein resides in the lysosome membrane. It carries out the reaction chloride(in) = chloride(out). The catalysed reaction is iodide(out) = iodide(in). The enzyme catalyses taurine(out) = taurine(in). It catalyses the reaction L-aspartate(out) = L-aspartate(in). It carries out the reaction L-glutamate(out) = L-glutamate(in). The catalysed reaction is myo-inositol(out) = myo-inositol(in). The enzyme catalyses 2',3'-cGAMP(out) = 2',3'-cGAMP(in). With respect to regulation, inhibited by (4-[(2-butyl-6,7-dichloro-2-cyclopentyl-2,3-dihydro-1-oxo-1H-inden-5-yl)oxy]butanoic acid), which plugs the channel like a cork in a bottle by binding in the extracellular selectivity filter and sterically occluding ion conduction. Lipids may block conduction in closed heterohexameric channels. Functionally, essential component of the volume-regulated anion channel (VRAC, also named VSOAC channel), an anion channel required to maintain a constant cell volume in response to extracellular or intracellular osmotic changes. The VRAC channel conducts iodide better than chloride and can also conduct organic osmolytes like taurine. Mediates efflux of amino acids, such as aspartate and glutamate, in response to osmotic stress. In complex with LRRC8C or LRRC8E, acts as a transporter of immunoreactive cyclic dinucleotide GMP-AMP (2'-3'-cGAMP), an immune messenger produced in response to DNA virus in the cytosol: mediates both import and export of 2'-3'-cGAMP, thereby promoting transfer of 2'-3'-cGAMP to bystander cells. In contrast, complexes containing LRRC8D inhibit transport of 2'-3'-cGAMP. Required for in vivo channel activity, together with at least one other family member (LRRC8B, LRRC8C, LRRC8D or LRRC8E); channel characteristics depend on the precise subunit composition. Can form functional channels by itself (in vitro). Involved in B-cell development: required for the pro-B cell to pre-B cell transition. Also required for T-cell development. Required for myoblast differentiation: VRAC activity promotes membrane hyperpolarization and regulates insulin-stimulated glucose metabolism and oxygen consumption. Also acts as a regulator of glucose-sensing in pancreatic beta cells: VRAC currents, generated in response to hypotonicity- or glucose-induced beta cell swelling, depolarize cells, thereby causing electrical excitation, leading to increase glucose sensitivity and insulin secretion. Also plays a role in lysosome homeostasis by forming functional lysosomal VRAC channels in response to low cytoplasmic ionic strength condition: lysosomal VRAC channels are necessary for the formation of large lysosome-derived vacuoles, which store and then expel excess water to maintain cytosolic water homeostasis. Acts as a key factor in NLRP3 inflammasome activation by modulating itaconate efflux and mitochondria function. The polypeptide is Volume-regulated anion channel subunit LRRC8A (Rattus norvegicus (Rat)).